Here is a 210-residue protein sequence, read N- to C-terminus: Probable GTP-binding protein EngB (210 aa).

Residues 25-199 (CGIEVAFAGR…RQKLDSWFSE (175 aa)) enclose the EngB-type G domain. GTP is bound by residues 33–40 (GRSNAGKS), 60–64 (GRTQL), 78–81 (DLPG), 145–148 (TKAD), and 178–180 (FSS). The Mg(2+) site is built by serine 40 and threonine 62.

It belongs to the TRAFAC class TrmE-Era-EngA-EngB-Septin-like GTPase superfamily. EngB GTPase family. Mg(2+) serves as cofactor.

Its function is as follows. Necessary for normal cell division and for the maintenance of normal septation. The protein is Probable GTP-binding protein EngB of Salmonella dublin (strain CT_02021853).